The primary structure comprises 548 residues: C2H2-type transcription factor MSN2 (548 aa).

2 consecutive C2H2-type zinc fingers follow at residues 420 to 448 (FKCE…QDKP) and 449 to 471 (FECN…ARTH).

In terms of assembly, interacts with HOG1/OSM1.

Its subcellular location is the nucleus. It localises to the cytoplasm. Transcription factor that acts as a key downstream transcription factor in the HOG1-MAPK pathway. Regulates the expression of a series of downstream genes and controls vegetative growth, conidiogenesis, cell wall integrity, stress response, mitochondrial morphology, and pathogenicity. Binds to a putative promoter region 1500 bp upstream of the start codons of the target genes MGG_07019, POX1 and DCI1. Binds to the AGGGG and CCCCT motif of the COS1 promoter region. Involved in fatty acid beta-oxidation by directly regulating the expression of the dienoyl-CoA isomerase DCI1, thereby facilitating invasive hyphal growth during the early infection stage. Targets also the 3-methylglutaconyl-CoA hydratase-encoding gene (AUH1) to control mitochondrial morphology and mitophagy, which are critical for the infectious growth of the pathogen. The sequence is that of C2H2-type transcription factor MSN2 from Pyricularia oryzae (strain 70-15 / ATCC MYA-4617 / FGSC 8958) (Rice blast fungus).